Reading from the N-terminus, the 543-residue chain is Chaperonin GroEL (543 aa).

ATP contacts are provided by residues 29–32, 86–90, Gly-413, 476–478, and Asp-492; these read TLGP, DGTTT, and NAA.

Belongs to the chaperonin (HSP60) family. As to quaternary structure, forms a cylinder of 14 subunits composed of two heptameric rings stacked back-to-back. Interacts with the co-chaperonin GroES.

The protein localises to the cytoplasm. It catalyses the reaction ATP + H2O + a folded polypeptide = ADP + phosphate + an unfolded polypeptide.. In terms of biological role, together with its co-chaperonin GroES, plays an essential role in assisting protein folding. The GroEL-GroES system forms a nano-cage that allows encapsulation of the non-native substrate proteins and provides a physical environment optimized to promote and accelerate protein folding. This chain is Chaperonin GroEL, found in Brevibacillus choshinensis.